The primary structure comprises 440 residues: Trigger factor (440 aa).

Residues 163 to 248 (GDTVVIDFKG…VHEVKTKELP (86 aa)) enclose the PPIase FKBP-type domain.

It belongs to the FKBP-type PPIase family. Tig subfamily.

The protein localises to the cytoplasm. The catalysed reaction is [protein]-peptidylproline (omega=180) = [protein]-peptidylproline (omega=0). Its function is as follows. Involved in protein export. Acts as a chaperone by maintaining the newly synthesized protein in an open conformation. Functions as a peptidyl-prolyl cis-trans isomerase. The protein is Trigger factor of Lactiplantibacillus plantarum (strain ATCC BAA-793 / NCIMB 8826 / WCFS1) (Lactobacillus plantarum).